The following is a 267-amino-acid chain: Orotidine 5'-phosphate decarboxylase (267 aa).

Substrate is bound by residues D40, 62–64 (KTH), 93–102 (DRKFADIGNT), Y215, and R234. K95 acts as the Proton donor in catalysis.

The protein belongs to the OMP decarboxylase family.

The enzyme catalyses orotidine 5'-phosphate + H(+) = UMP + CO2. It participates in pyrimidine metabolism; UMP biosynthesis via de novo pathway; UMP from orotate: step 2/2. The polypeptide is Orotidine 5'-phosphate decarboxylase (pyrG) (Phycomyces blakesleeanus (strain ATCC 8743b / DSM 1359 / FGSC 10004 / NBRC 33097 / NRRL 1555)).